The primary structure comprises 1057 residues: DNA-directed RNA polymerase subunit beta' (1057 aa).

Cysteine 60, cysteine 62, cysteine 75, and cysteine 78 together coordinate Zn(2+). Mg(2+)-binding residues include aspartate 449, aspartate 451, and aspartate 453. Residues cysteine 822, cysteine 896, cysteine 903, and cysteine 906 each coordinate Zn(2+).

This sequence belongs to the RNA polymerase beta' chain family. The RNAP catalytic core consists of 2 alpha, 1 beta, 1 beta' and 1 omega subunit. When a sigma factor is associated with the core the holoenzyme is formed, which can initiate transcription. Requires Mg(2+) as cofactor. It depends on Zn(2+) as a cofactor.

The catalysed reaction is RNA(n) + a ribonucleoside 5'-triphosphate = RNA(n+1) + diphosphate. Functionally, DNA-dependent RNA polymerase catalyzes the transcription of DNA into RNA using the four ribonucleoside triphosphates as substrates. In Staphylococcus aureus, this protein is DNA-directed RNA polymerase subunit beta'.